We begin with the raw amino-acid sequence, 66 residues long: Large ribosomal subunit protein bL35 (66 aa).

The span at 18-27 (ATGKIKSTQS) shows a compositional bias: polar residues. The interval 18–41 (ATGKIKSTQSAKRHGMTKRSKRSI) is disordered. Basic residues predominate over residues 28–41 (AKRHGMTKRSKRSI).

The protein belongs to the bacterial ribosomal protein bL35 family.

This chain is Large ribosomal subunit protein bL35, found in Ehrlichia ruminantium (strain Gardel).